Here is a 68-residue protein sequence, read N- to C-terminus: MKILCLLFAVLLFLFQAAPGSADPLFPDTVACRTQGNFCRAGACPPTFTISGQCHGGLLNCCAKIPAQ.

A signal peptide spans 1 to 19 (MKILCLLFAVLLFLFQAAP). Residues 20–25 (GSADPL) constitute a propeptide that is removed on maturation. 3 cysteine pairs are disulfide-bonded: Cys32-Cys61, Cys39-Cys54, and Cys44-Cys62.

It belongs to the beta-defensin family. As to expression, strong expression in the testis, liver, gall bladder and kidney. Also expressed in the ovary and male and female reproductive tracts. Expressed in the ovarian stroma and the theca and granulosa layers of the ovarian follicle.

It localises to the secreted. The protein resides in the cytoplasmic granule. Has bactericidal activity. In Gallus gallus (Chicken), this protein is Gallinacin-10 (GAL10).